We begin with the raw amino-acid sequence, 388 residues long: Xylose isomerase (388 aa).

Active-site residues include His54 and Asp57. Glu181, Glu217, His220, Asp245, Asp255, Asp257, and Asp287 together coordinate Mg(2+).

Belongs to the xylose isomerase family. In terms of assembly, homotetramer. The cofactor is Mg(2+).

The protein localises to the cytoplasm. It carries out the reaction alpha-D-xylose = alpha-D-xylulofuranose. Its function is as follows. Involved in D-xylose catabolism. The protein is Xylose isomerase (xylA) of Streptomyces murinus.